The primary structure comprises 436 residues: Cytochrome P450 monooxygenase phqO (436 aa).

Cys-377 contacts heme.

The protein belongs to the cytochrome P450 family. Heme is required as a cofactor.

It participates in alkaloid biosynthesis. Its function is as follows. Cytochrome P450 monooxygenase; part of the gene cluster that mediates the biosynthesis of paraherquamide, a fungal indole alkaloid that belongs to a family of natural products containing a characteristic bicyclo[2.2.2]diazaoctane core. The first steps in the biosynthesis of paraherquamide is the production of the beta-methyl-proline precursor from L-isoleucine. They require oxidation of a terminally hydroxylated L-isoleucine to the corresponding aldehyde by enzymes which have still to be identified. Spontaneous cyclization and dehydration would yield the 4-methyl pyrolline-5-carboxylic acid, which is then reduced by the pyrroline-5-carboxylate reductase phqD leading to the beta-methyl-proline precursor. The next step of paraherquamide biosynthesis involves coupling of beta-methyl-proline and L-tryptophan by the bimodular NRPS phqB, to produce a monooxopiperazine intermediate. The reductase (R) domain of phqB utilizes NADPH for hydride transfer to reduce the thioester bond of the T domain-tethered linear dipeptide to a hemithioaminal intermediate, which spontaneously cleaves the C-S bond to release the aldehyde product. This compound undergoes spontaneous cyclization and dehydration to give a dienamine which is reverse prenylated at C-2 by the reverse prenyltransferase phqJ. The other prenyltransferase present in the cluster, phqI may be a redundant gene in the pathway. During biosynthetic assembly, the key step to produce the polycyclic core is catalyzed by the bifunctional reductase and intramolecular [4+2] Diels-Alderase, phqE, resulting in formation of the [2.2.2] diazaoctane intermediate preparaherquamide. Following formation of preparaherquamide, an indole 2,3-epoxidation-initiated pinacol-like rearrangement is catalyzed by the phqK FAD-dependent monooxygenase. The prenyltransferase phqA, the cytochrome P450 monooxygenase phqL, and the FAD-linked oxidoreductase phqH (or the cytochrome P450 monooxygenase phqM), are proposed to be involved in the formation of the pyran ring. The FAD-dependent monooxygenase phqK is likely responsible for generation of the spiro-oxindole, and the N-methylation is likely mediated by the phqN methyltransferase leading to the isolable natural product paraherquamide F. However, the order of these biosynthetic steps has still to be determined. In late-stage paraherquamide biosynthesis, the third P450 monooxygenase, phqO, is probably responsible for the C-14 hydroxylation, transforming paraherquamide F to paraherquamide G, and paraherquamide E to the final product paraherquamide A. The expansion from the 6-membered ring pyran (in paraherquamides F and G) to the 7-membered dioxepin ring (in paraherquamides A and E) represents a poorly understood but intriguing process that probably involves the 2-oxoglutarate-dependent dioxygenase phqC. Finally, the remaining members of the paraherquamide cluster, including phqI as well as phqM (or phqH), do not have a clearly prescribed role and appear to be redundant. This Penicillium fellutanum protein is Cytochrome P450 monooxygenase phqO.